The following is a 251-amino-acid chain: Hydroxyacylglutathione hydrolase (251 aa).

Zn(2+)-binding residues include histidine 53, histidine 55, aspartate 57, histidine 58, histidine 110, aspartate 127, and histidine 165.

This sequence belongs to the metallo-beta-lactamase superfamily. Glyoxalase II family. As to quaternary structure, monomer. The cofactor is Zn(2+).

The enzyme catalyses an S-(2-hydroxyacyl)glutathione + H2O = a 2-hydroxy carboxylate + glutathione + H(+). Its pathway is secondary metabolite metabolism; methylglyoxal degradation; (R)-lactate from methylglyoxal: step 2/2. Its function is as follows. Thiolesterase that catalyzes the hydrolysis of S-D-lactoyl-glutathione to form glutathione and D-lactic acid. The protein is Hydroxyacylglutathione hydrolase of Salmonella dublin (strain CT_02021853).